The sequence spans 890 residues: MSMEESIIRIPPYHYIHVLDQNSNVSRVEVGPKTYIRQDNERILFAPVRMLTVPPRHYCMVANPVARDAQGTVLFDVTGQVRLRHADLEIRLAQDPFPLFPGEVLEKDITPLQVVLPNTALHLKALLDFEDKNGQKVVAGDEWLFEGPGTYIPQKEVEVIEIIQATVIKQNQALRLRARKECLDRDGKERVTGEEWLVRSVGAYLPAVFEEVLDVVDAVILTEKTALHLRARQNFRDVRGVTRRTGEEWLVTVQDTEAHVPDVYEEVMGVVSVTTLGPHNYCVILDPVGPDGKNQLGQKLVFKGEQSFFLQPGEKLERGIQNVYVLSEQQGLLLRALQPLEEGEGKEKVSHQAGDHWLIRGPLEYVPPAKVEVVEERQAIPLDENEGIYVQDVKTGRVRAVIGSTYMLTQDEVLWEKELPPGVEELLNKGQDPLADRGEKETSKTPKLSTPRNKTRVVSYRVPHNAAVQVYDYREKKARVVFGPELVLLGPEEQFTVLSLSAGRPKRPHARRTLCLLLGPDFFTDVITIETADHARLQLQLAYNWHFELSDRKDPQETAKLFSVPDFVGDACKAIASRVRGAVASVTFDDFHKNSARIIRTAVFGFETQETKGPDTMALPQPRDRAVFPQNGLVVSSVDVQSVEPVDQRTRDALQRSVQLAIEIATNSQEAAAKHEAQRLEQEARGRLERQKILDQSEAEKARRELLELEALSTAVESTGTAKAEAESRAEAARIEGEGAVLQAKLKAEALAIETEAELERVKKVRELELLYARAQLELEVSKAQQLAEVEVKKFKQMTEALGPSTIRDMAVAGPEMQVKLLQSLGLKSTLITDGSTPINLFNTALGLLGLGAEAQPPAKKPTGGPSVQEGLLPISTAAPLTLGNNQVVP.

MVP repeat units lie at residues 2 to 56 (SMEE…VPPR), 57 to 111 (HYCM…DITP), 112 to 164 (LQVV…EIIQ), 165 to 217 (ATVI…DVVD), 218 to 272 (AVIL…GVVS), 273 to 323 (VTTL…IQNV), 324 to 379 (YVLS…ERQA), 380 to 457 (IPLD…KTRV), and 458 to 520 (VSYR…LLGP). The segment at 425–455 (ELLNKGQDPLADRGEKETSKTPKLSTPRNKT) is disordered. Residues 434 to 444 (LADRGEKETSK) show a composition bias toward basic and acidic residues. K444 participates in a covalent cross-link: Glycyl lysine isopeptide (Lys-Gly) (interchain with G-Cter in SUMO2).

The vault ribonucleoprotein particle is a huge (400 A x 670 A) cage structure of 12.9 MDa. It consists of a dimer of half-vaults, with each half-vault comprising 39 identical major vault protein (MVP) chains, PARP4 and one or more vault RNAs (vRNAs). Interacts with TEP1. Interacts with PTEN and activated MAPK1. The phosphorylated protein interacts with the SH2 domains of PTPN11 and SRC. Interacts with APEX1. May interact with ZNF540. In terms of processing, phosphorylated on Tyr residues after EGF stimulation. Post-translationally, dephosphorylated by PTPN11.

The protein localises to the cytoplasm. The protein resides in the nucleus. Its function is as follows. Required for normal vault structure. Vaults are multi-subunit structures that may act as scaffolds for proteins involved in signal transduction. Vaults may also play a role in nucleo-cytoplasmic transport. Down-regulates IFNG-mediated STAT1 signaling and subsequent activation of JAK. Down-regulates SRC activity and signaling through MAP kinases. The polypeptide is Major vault protein (MVP) (Bos taurus (Bovine)).